The primary structure comprises 257 residues: 5-oxoprolinase subunit A (257 aa).

Belongs to the LamB/PxpA family. In terms of assembly, forms a complex composed of PxpA, PxpB and PxpC.

It carries out the reaction 5-oxo-L-proline + ATP + 2 H2O = L-glutamate + ADP + phosphate + H(+). In terms of biological role, catalyzes the cleavage of 5-oxoproline to form L-glutamate coupled to the hydrolysis of ATP to ADP and inorganic phosphate. In Natranaerobius thermophilus (strain ATCC BAA-1301 / DSM 18059 / JW/NM-WN-LF), this protein is 5-oxoprolinase subunit A.